The sequence spans 466 residues: Zinc finger and SCAN domain-containing protein 26 (466 aa).

Residue Lys21 forms a Glycyl lysine isopeptide (Lys-Gly) (interchain with G-Cter in SUMO2) linkage. The SCAN box domain maps to 42–124 (CKQFRQLRYE…GILEDLQLDR (83 aa)). Basic and acidic residues-rich tracts occupy residues 124–135 (RGKAGEQKDSAQ) and 163–173 (KPEERGKETRS). Residues 124–182 (RGKAGEQKDSAQRSRPTVLVGEPAPRREAREQPGCALPQKPEERGKETRSENGNLIAGT) are disordered. A C2H2-type 1; degenerate zinc finger spans residues 220-242 (SQCLETKERLVQNSGLIEHDRAH). 7 consecutive C2H2-type zinc fingers follow at residues 270–292 (HPCQ…QKIH), 298–320 (YQCK…LRIH), 326–348 (YLCI…QKIH), 354–376 (RECK…QRVH), 382–404 (HHCN…HRIH), 410–432 (FKCN…VRIH), and 438–460 (YKCS…QRHH).

Its subcellular location is the nucleus. May be involved in transcriptional regulation. This chain is Zinc finger and SCAN domain-containing protein 26 (Zscan26), found in Mus musculus (Mouse).